We begin with the raw amino-acid sequence, 469 residues long: Glutamate--tRNA ligase (469 aa).

The short motif at 12–22 (PSPTGFIHLGN) is the 'HIGH' region element. The 'KMSKS' region signature appears at 244–248 (KMSKR). Lys-247 is an ATP binding site.

The protein belongs to the class-I aminoacyl-tRNA synthetase family. Glutamate--tRNA ligase type 1 subfamily. In terms of assembly, monomer.

The protein localises to the cytoplasm. It carries out the reaction tRNA(Glu) + L-glutamate + ATP = L-glutamyl-tRNA(Glu) + AMP + diphosphate. In terms of biological role, catalyzes the attachment of glutamate to tRNA(Glu) in a two-step reaction: glutamate is first activated by ATP to form Glu-AMP and then transferred to the acceptor end of tRNA(Glu). The protein is Glutamate--tRNA ligase of Acidovorax sp. (strain JS42).